The chain runs to 264 residues: S-adenosylmethionine decarboxylase proenzyme (264 aa).

Serine 113 (schiff-base intermediate with substrate; via pyruvic acid) is an active-site residue. Position 113 is a pyruvic acid (Ser); by autocatalysis (serine 113). Residue histidine 118 is the Proton acceptor; for processing activity of the active site. The active-site Proton donor; for catalytic activity is cysteine 141.

Belongs to the prokaryotic AdoMetDC family. Type 2 subfamily. As to quaternary structure, heterooctamer of four alpha and four beta chains arranged as a tetramer of alpha/beta heterodimers. Pyruvate is required as a cofactor. Post-translationally, is synthesized initially as an inactive proenzyme. Formation of the active enzyme involves a self-maturation process in which the active site pyruvoyl group is generated from an internal serine residue via an autocatalytic post-translational modification. Two non-identical subunits are generated from the proenzyme in this reaction, and the pyruvate is formed at the N-terminus of the alpha chain, which is derived from the carboxyl end of the proenzyme. The post-translation cleavage follows an unusual pathway, termed non-hydrolytic serinolysis, in which the side chain hydroxyl group of the serine supplies its oxygen atom to form the C-terminus of the beta chain, while the remainder of the serine residue undergoes an oxidative deamination to produce ammonia and the pyruvoyl group blocking the N-terminus of the alpha chain.

The catalysed reaction is S-adenosyl-L-methionine + H(+) = S-adenosyl 3-(methylsulfanyl)propylamine + CO2. The protein operates within amine and polyamine biosynthesis; S-adenosylmethioninamine biosynthesis; S-adenosylmethioninamine from S-adenosyl-L-methionine: step 1/1. In terms of biological role, catalyzes the decarboxylation of S-adenosylmethionine to S-adenosylmethioninamine (dcAdoMet), the propylamine donor required for the synthesis of the polyamines spermine and spermidine from the diamine putrescine. This chain is S-adenosylmethionine decarboxylase proenzyme, found in Xanthomonas euvesicatoria pv. vesicatoria (strain 85-10) (Xanthomonas campestris pv. vesicatoria).